An 82-amino-acid polypeptide reads, in one-letter code: ATP synthase subunit c (82 aa).

2 helical membrane passes run 7–27 and 57–77; these read AASV…PGIG and LAFM…LLFA.

This sequence belongs to the ATPase C chain family. As to quaternary structure, F-type ATPases have 2 components, F(1) - the catalytic core - and F(0) - the membrane proton channel. F(1) has five subunits: alpha(3), beta(3), gamma(1), delta(1), epsilon(1). F(0) has four main subunits: a(1), b(1), b'(1) and c(10-14). The alpha and beta chains form an alternating ring which encloses part of the gamma chain. F(1) is attached to F(0) by a central stalk formed by the gamma and epsilon chains, while a peripheral stalk is formed by the delta, b and b' chains.

The protein resides in the cellular thylakoid membrane. Its function is as follows. F(1)F(0) ATP synthase produces ATP from ADP in the presence of a proton or sodium gradient. F-type ATPases consist of two structural domains, F(1) containing the extramembraneous catalytic core and F(0) containing the membrane proton channel, linked together by a central stalk and a peripheral stalk. During catalysis, ATP synthesis in the catalytic domain of F(1) is coupled via a rotary mechanism of the central stalk subunits to proton translocation. Key component of the F(0) channel; it plays a direct role in translocation across the membrane. A homomeric c-ring of between 10-14 subunits forms the central stalk rotor element with the F(1) delta and epsilon subunits. This Synechococcus sp. (strain WH7803) protein is ATP synthase subunit c.